Here is a 383-residue protein sequence, read N- to C-terminus: MRLQDLSPGLGELDERHRLRRRATLESPQGDEVVIDGRSYISFASNDYLGLADHPSLVRALQQGADRWGAGSGASHLLTGHTLAHQQAEEALAGFVGREAALLFGSGYAANLAVITSLVGRGDAVFADKLNHASLNDGCLLSRADFQRFRHNDLAHLEQLLADSGAPTKLIAVDAVYSMDGDQAPLPALLALAERYDAWLYVDDAHGFGVLGDGRGSAALHGLASDRLIYMATLGKAAGLAGAFVAGCRPLVDWLVNKARTYIYTTAQPPALAAAVGASLRLIAEGGERRERLRQLISRCRQRLEGTPYAGASATAIQPFVVGSDENAVRLAETLREQGYWVPAVRPPTVPENGARLRISLSARHELSQLDALLDLMLRPAES.

Arg20 serves as a coordination point for substrate. 107–108 (GY) provides a ligand contact to pyridoxal 5'-phosphate. His132 contributes to the substrate binding site. 3 residues coordinate pyridoxal 5'-phosphate: Ser178, His206, and Thr233. Lys236 carries the N6-(pyridoxal phosphate)lysine modification. Thr349 is a binding site for substrate.

The protein belongs to the class-II pyridoxal-phosphate-dependent aminotransferase family. BioF subfamily. In terms of assembly, homodimer. Pyridoxal 5'-phosphate is required as a cofactor.

It catalyses the reaction 6-carboxyhexanoyl-[ACP] + L-alanine + H(+) = (8S)-8-amino-7-oxononanoate + holo-[ACP] + CO2. The protein operates within cofactor biosynthesis; biotin biosynthesis. Its function is as follows. Catalyzes the decarboxylative condensation of pimeloyl-[acyl-carrier protein] and L-alanine to produce 8-amino-7-oxononanoate (AON), [acyl-carrier protein], and carbon dioxide. This chain is 8-amino-7-oxononanoate synthase, found in Chromobacterium violaceum (strain ATCC 12472 / DSM 30191 / JCM 1249 / CCUG 213 / NBRC 12614 / NCIMB 9131 / NCTC 9757 / MK).